A 202-amino-acid chain; its full sequence is Neuroligin-3 (202 aa).

Topologically, residues 1 to 202 (RYGSPTYFYA…TGTRMQGHSW (202 aa)) are extracellular. Cys-15 and Cys-49 are joined by a disulfide. Asn-50 carries N-linked (GlcNAc...) asparagine glycosylation. The interval 154-202 (LRIPPTAPTSPAGPMARPGAPSGQPSHLPTATRMPRGPGTGTRMQGHSW) is disordered.

It belongs to the type-B carboxylesterase/lipase family. Homodimer, and heterodimer with NLGN1 and NLGN2. Interacts with neurexins NRXN1, NRXN2 and NRXN3. Interaction with neurexins is mediated by heparan sulfate glycan modification on neurexin. Interacts (via its C-terminus) with DLG4/PSD-95 (via PDZ domain 3).

It is found in the cell membrane. It localises to the synapse. Functionally, cell surface protein involved in cell-cell-interactions via its interactions with neurexin family members. Plays a role in synapse function and synaptic signal transmission, and probably mediates its effects by recruiting and clustering other synaptic proteins. May promote the initial formation of synapses, but is not essential for this. May also play a role in glia-glia or glia-neuron interactions in the developing peripheral nervous system. The chain is Neuroligin-3 (NLGN3) from Macaca mulatta (Rhesus macaque).